The primary structure comprises 310 residues: Glycine--tRNA ligase alpha subunit (310 aa).

Belongs to the class-II aminoacyl-tRNA synthetase family. In terms of assembly, tetramer of two alpha and two beta subunits.

The protein resides in the cytoplasm. The enzyme catalyses tRNA(Gly) + glycine + ATP = glycyl-tRNA(Gly) + AMP + diphosphate. The protein is Glycine--tRNA ligase alpha subunit of Agrobacterium fabrum (strain C58 / ATCC 33970) (Agrobacterium tumefaciens (strain C58)).